The sequence spans 238 residues: MORN repeat-containing protein 3 (238 aa).

MORN repeat units follow at residues 38–60, 62–84, 91–113, 114–136, 137–159, 160–182, and 184–205; these read YTGEWLNNLRHGKGTYMWKRRKS, YEGDWKCGERSGFGTYSVQDSNT, YSGYWDNDKKHGYGTHFYSAKEY, YEGEWKCGKRCGWGRMYFANGDI, YEGEWLEDKHSGQGMLCLANENR, YEGSWKDGKKHGPGKFYYLNKGQ, and YEGVWVEDIPKCGTMVDFGRTE.

It localises to the cytoplasmic vesicle. It is found in the secretory vesicle. The protein resides in the acrosome. Its function is as follows. Assembles a suppression complex (suppresome) by tethering SIRT1 and MDM2 to regulate composite modifications of p53/TP53. Confers both deacetylation-mediated functional inactivation, by SIRT1, and ubiquitination-dependent degradation, by MDM2, of p53/TP53, promoting a proliferative and cell survival behaviors. May play a role in the regulation of spermatogenesis. The sequence is that of MORN repeat-containing protein 3 (morn3) from Xenopus laevis (African clawed frog).